Here is a 436-residue protein sequence, read N- to C-terminus: Acetyl-CoA decarbonylase/synthase complex subunit delta 2 (436 aa).

This sequence belongs to the CdhD family. As to quaternary structure, heterodimer of delta and gamma chains. The ACDS complex is made up of alpha, epsilon, beta, gamma and delta chains with a probable stoichiometry of (alpha(2)epsilon(2))(4)-beta(8)-(gamma(1)delta(1))(8) (Potential).

It participates in one-carbon metabolism; methanogenesis from acetate. Part of a complex that catalyzes the reversible cleavage of acetyl-CoA, allowing growth on acetate as sole source of carbon and energy. Probably maintains the overall quaternary structure of the ACDS complex. The sequence is that of Acetyl-CoA decarbonylase/synthase complex subunit delta 2 (cdhD2) from Methanosarcina acetivorans (strain ATCC 35395 / DSM 2834 / JCM 12185 / C2A).